Reading from the N-terminus, the 324-residue chain is tRNA U34 carboxymethyltransferase (324 aa).

Carboxy-S-adenosyl-L-methionine is bound by residues lysine 92, tryptophan 106, lysine 111, glycine 131, 153–155, 182–183, methionine 197, tyrosine 201, and arginine 316; these read DPT and IE.

The protein belongs to the class I-like SAM-binding methyltransferase superfamily. CmoB family. In terms of assembly, homotetramer.

The enzyme catalyses carboxy-S-adenosyl-L-methionine + 5-hydroxyuridine(34) in tRNA = 5-carboxymethoxyuridine(34) in tRNA + S-adenosyl-L-homocysteine + H(+). Catalyzes carboxymethyl transfer from carboxy-S-adenosyl-L-methionine (Cx-SAM) to 5-hydroxyuridine (ho5U) to form 5-carboxymethoxyuridine (cmo5U) at position 34 in tRNAs. This is tRNA U34 carboxymethyltransferase from Proteus mirabilis (strain HI4320).